Here is an 830-residue protein sequence, read N- to C-terminus: Scavenger receptor class F member 1 (830 aa).

Residues 1 to 19 (MGLGLLLPLLLLWTRGTQG) form the signal peptide. Topologically, residues 20–421 (SELDPKGQHV…CQPGSGSRDT (402 aa)) are extracellular. 4 EGF-like domains span residues 53–87 (TIPI…AHCS), 95–130 (WGPD…ARCE), 155–191 (WSST…RRCS), and 215–249 (WGPE…ARCE). 12 disulfide bridges follow: Cys-57–Cys-69, Cys-63–Cys-75, Cys-77–Cys-86, Cys-99–Cys-111, Cys-105–Cys-118, Cys-120–Cys-129, Cys-159–Cys-172, Cys-165–Cys-179, Cys-181–Cys-190, Cys-219–Cys-230, Cys-225–Cys-237, and Cys-239–Cys-248. An N-linked (GlcNAc...) asparagine glycan is attached at Asn-289. 2 EGF-like domains span residues 302–339 (FGES…PRCE) and 351–382 (CGST…PSCN). 6 cysteine pairs are disulfide-bonded: Cys-306-Cys-319, Cys-313-Cys-326, Cys-329-Cys-338, Cys-355-Cys-363, Cys-358-Cys-370, and Cys-372-Cys-381. Asn-382 and Asn-393 each carry an N-linked (GlcNAc...) asparagine glycan. A helical membrane pass occupies residues 422–442 (ALIAGSLVPLLLLFLGLACCA). Over 443–830 (CCCWAPRSDL…VVPISRPPEP (388 aa)) the chain is Cytoplasmic. 3 disordered regions span residues 516–539 (GWAT…PAYC), 581–688 (SLAR…SGPV), and 715–830 (FQKG…PPEP). Phosphoserine occurs at positions 589 and 606. The segment covering 634-643 (ESTGPEEAEA) has biased composition (acidic residues). Residues 644 to 653 (PESFPAAASP) show a composition bias toward low complexity.

As to quaternary structure, heterophilic interaction with SREC2 via its extracellular domain. The heterophilic interaction is suppressed by the presence of ligand such as Ac-LDL. Interacts with AVIL. As to expression, endothelial cells.

The protein resides in the membrane. Its function is as follows. Mediates the binding and degradation of acetylated low density lipoprotein (Ac-LDL). Mediates heterophilic interactions, suggesting a function as adhesion protein. Plays a role in the regulation of neurite-like outgrowth. This Homo sapiens (Human) protein is Scavenger receptor class F member 1 (SCARF1).